The primary structure comprises 600 residues: Probable translation initiation factor IF-2 (600 aa).

The tr-type G domain maps to leucine 13–methionine 228. The interval glycine 22 to threonine 29 is G1. Glycine 22–threonine 29 serves as a coordination point for GTP. Positions alanine 47 to histidine 51 are G2. The G3 stretch occupies residues aspartate 84–glycine 87. GTP-binding positions include aspartate 84–histidine 88 and asparagine 138–aspartate 141. The tract at residues asparagine 138–aspartate 141 is G4. The segment at isoleucine 140 to serine 162 is disordered. Positions serine 206–glutamate 208 are G5.

It belongs to the TRAFAC class translation factor GTPase superfamily. Classic translation factor GTPase family. IF-2 subfamily.

Its function is as follows. Function in general translation initiation by promoting the binding of the formylmethionine-tRNA to ribosomes. Seems to function along with eIF-2. The protein is Probable translation initiation factor IF-2 of Halobacterium salinarum (strain ATCC 700922 / JCM 11081 / NRC-1) (Halobacterium halobium).